The chain runs to 385 residues: 1-deoxy-D-xylulose 5-phosphate reductoisomerase 1 (385 aa).

Residues Thr11, Gly12, Ser13, Ile14, Asn39, and Asn122 each coordinate NADPH. Lys123 provides a ligand contact to 1-deoxy-D-xylulose 5-phosphate. Glu124 is an NADPH binding site. A Mn(2+)-binding site is contributed by Asp148. 1-deoxy-D-xylulose 5-phosphate contacts are provided by Ser149, Glu150, Ser174, and His197. Glu150 contacts Mn(2+). Residue Gly203 participates in NADPH binding. Residues Ser210, Asn215, Lys216, and Glu219 each coordinate 1-deoxy-D-xylulose 5-phosphate. Glu219 contacts Mn(2+).

It belongs to the DXR family. The cofactor is Mg(2+). Mn(2+) is required as a cofactor.

It carries out the reaction 2-C-methyl-D-erythritol 4-phosphate + NADP(+) = 1-deoxy-D-xylulose 5-phosphate + NADPH + H(+). It participates in isoprenoid biosynthesis; isopentenyl diphosphate biosynthesis via DXP pathway; isopentenyl diphosphate from 1-deoxy-D-xylulose 5-phosphate: step 1/6. Catalyzes the NADPH-dependent rearrangement and reduction of 1-deoxy-D-xylulose-5-phosphate (DXP) to 2-C-methyl-D-erythritol 4-phosphate (MEP). The chain is 1-deoxy-D-xylulose 5-phosphate reductoisomerase 1 from Bacillus cereus (strain ATCC 14579 / DSM 31 / CCUG 7414 / JCM 2152 / NBRC 15305 / NCIMB 9373 / NCTC 2599 / NRRL B-3711).